The following is a 131-amino-acid chain: Ribosome-binding factor A (131 aa).

Belongs to the RbfA family. Monomer. Binds 30S ribosomal subunits, but not 50S ribosomal subunits or 70S ribosomes.

It is found in the cytoplasm. Its function is as follows. One of several proteins that assist in the late maturation steps of the functional core of the 30S ribosomal subunit. Associates with free 30S ribosomal subunits (but not with 30S subunits that are part of 70S ribosomes or polysomes). Required for efficient processing of 16S rRNA. May interact with the 5'-terminal helix region of 16S rRNA. This is Ribosome-binding factor A from Ruegeria pomeroyi (strain ATCC 700808 / DSM 15171 / DSS-3) (Silicibacter pomeroyi).